Consider the following 382-residue polypeptide: Phosphatidylglycerol--prolipoprotein diacylglyceryl transferase (382 aa).

The next 3 helical transmembrane spans lie at isoleucine 18–phenylalanine 38, phenylalanine 53–isoleucine 73, and leucine 91–phenylalanine 111. An a 1,2-diacyl-sn-glycero-3-phospho-(1'-sn-glycerol)-binding site is contributed by arginine 162. A run of 4 helical transmembrane segments spans residues isoleucine 213–valine 233, glycine 243–phenylalanine 263, isoleucine 274–isoleucine 294, and phenylalanine 302–phenylalanine 322.

The protein belongs to the Lgt family.

It localises to the cell membrane. It catalyses the reaction L-cysteinyl-[prolipoprotein] + a 1,2-diacyl-sn-glycero-3-phospho-(1'-sn-glycerol) = an S-1,2-diacyl-sn-glyceryl-L-cysteinyl-[prolipoprotein] + sn-glycerol 1-phosphate + H(+). The protein operates within protein modification; lipoprotein biosynthesis (diacylglyceryl transfer). Its function is as follows. Catalyzes the transfer of the diacylglyceryl group from phosphatidylglycerol to the sulfhydryl group of the N-terminal cysteine of a prolipoprotein, the first step in the formation of mature lipoproteins. The protein is Phosphatidylglycerol--prolipoprotein diacylglyceryl transferase of Mycoplasma genitalium (strain ATCC 33530 / DSM 19775 / NCTC 10195 / G37) (Mycoplasmoides genitalium).